The following is a 218-amino-acid chain: Adenylate kinase (218 aa).

10–15 (GAGKGT) is an ATP binding site. The segment at 30 to 59 (STGDIFREAIAKGTELGRKVQDIVNSGNLV) is NMP. Residues T31, R36, 57–59 (NLV), 85–88 (GYPR), and Q92 contribute to the AMP site. The LID stretch occupies residues 126 to 163 (TRRVCSKCGKVYNVITLPSKVEGICDDCGGTLIQRDDD). Residue R127 coordinates ATP. The Zn(2+) site is built by C130 and C133. Residue 136–137 (VY) participates in ATP binding. 2 residues coordinate Zn(2+): C150 and C153. Residues R160 and R171 each contribute to the AMP site. ATP is bound at residue K199.

This sequence belongs to the adenylate kinase family. In terms of assembly, monomer.

The protein localises to the cytoplasm. It carries out the reaction AMP + ATP = 2 ADP. The protein operates within purine metabolism; AMP biosynthesis via salvage pathway; AMP from ADP: step 1/1. Catalyzes the reversible transfer of the terminal phosphate group between ATP and AMP. Plays an important role in cellular energy homeostasis and in adenine nucleotide metabolism. The protein is Adenylate kinase of Fervidobacterium nodosum (strain ATCC 35602 / DSM 5306 / Rt17-B1).